A 466-amino-acid chain; its full sequence is Bifunctional protein GlmU (466 aa).

The interval methionine 1–arginine 236 is pyrophosphorylase. UDP-N-acetyl-alpha-D-glucosamine contacts are provided by residues leucine 13–glycine 16, lysine 27, glutamine 79, glycine 84–threonine 85, tyrosine 107–aspartate 109, glycine 146, glutamate 161, asparagine 176, and asparagine 234. Position 109 (aspartate 109) interacts with Mg(2+). Asparagine 234 serves as a coordination point for Mg(2+). Residues alanine 237 to alanine 257 are linker. Positions glycine 258–threonine 466 are N-acetyltransferase. Arginine 340 and lysine 358 together coordinate UDP-N-acetyl-alpha-D-glucosamine. Histidine 370 serves as the catalytic Proton acceptor. UDP-N-acetyl-alpha-D-glucosamine contacts are provided by tyrosine 373 and asparagine 384. Acetyl-CoA-binding positions include alanine 387, asparagine 393–tyrosine 394, serine 412, alanine 430, and arginine 447.

This sequence in the N-terminal section; belongs to the N-acetylglucosamine-1-phosphate uridyltransferase family. In the C-terminal section; belongs to the transferase hexapeptide repeat family. As to quaternary structure, homotrimer. Mg(2+) serves as cofactor.

The protein localises to the cytoplasm. The enzyme catalyses alpha-D-glucosamine 1-phosphate + acetyl-CoA = N-acetyl-alpha-D-glucosamine 1-phosphate + CoA + H(+). The catalysed reaction is N-acetyl-alpha-D-glucosamine 1-phosphate + UTP + H(+) = UDP-N-acetyl-alpha-D-glucosamine + diphosphate. Its pathway is nucleotide-sugar biosynthesis; UDP-N-acetyl-alpha-D-glucosamine biosynthesis; N-acetyl-alpha-D-glucosamine 1-phosphate from alpha-D-glucosamine 6-phosphate (route II): step 2/2. The protein operates within nucleotide-sugar biosynthesis; UDP-N-acetyl-alpha-D-glucosamine biosynthesis; UDP-N-acetyl-alpha-D-glucosamine from N-acetyl-alpha-D-glucosamine 1-phosphate: step 1/1. It functions in the pathway bacterial outer membrane biogenesis; LPS lipid A biosynthesis. In terms of biological role, catalyzes the last two sequential reactions in the de novo biosynthetic pathway for UDP-N-acetylglucosamine (UDP-GlcNAc). The C-terminal domain catalyzes the transfer of acetyl group from acetyl coenzyme A to glucosamine-1-phosphate (GlcN-1-P) to produce N-acetylglucosamine-1-phosphate (GlcNAc-1-P), which is converted into UDP-GlcNAc by the transfer of uridine 5-monophosphate (from uridine 5-triphosphate), a reaction catalyzed by the N-terminal domain. The sequence is that of Bifunctional protein GlmU from Solibacter usitatus (strain Ellin6076).